A 1009-amino-acid chain; its full sequence is Glutamate receptor ionotropic, delta-1 (1009 aa).

The signal sequence occupies residues 1–20 (MEALTLWLLPWICQCVSVRA). The interaction with CBLN1 stretch occupies residues 21-436 (DSIIHIGAIF…ERPMGSRLQG (416 aa)). Topologically, residues 21-562 (DSIIHIGAIF…SIFSLFAPFD (542 aa)) are extracellular. Disulfide bonds link C80–C351, C96–C128, and C294–C306. N-linked (GlcNAc...) asparagine glycans are attached at residues N131 and N200. N-linked (GlcNAc...) asparagine glycans are attached at residues N422 and N498. Residues E527, V530, and D531 each coordinate Ca(2+). A helical transmembrane segment spans residues 563–583 (FAVWACIAAAIPVVGVLIFVL). The Cytoplasmic segment spans residues 584-637 (NRIQAVRAQSAAQPRPSASATLHSAIWIVYGAFVQQGGESSVNSMAMRIVMGSW). The chain crosses the membrane as a helical span at residues 638 to 658 (WLFTLIVCSSYTANLAAFLTV). The Extracellular segment spans residues 659 to 830 (SRMDNPIRTF…ADGKSLKLHS (172 aa)). Ca(2+)-binding residues include D753, D755, and S757. A helical membrane pass occupies residues 831 to 851 (FAGVFCILAIGLLLACLVAAL). Residues 852 to 1009 (ELWWNSNRCH…ALDTSHGTSI (158 aa)) lie on the Cytoplasmic side of the membrane. A compositionally biased stretch (polar residues) spans 930 to 942 (FLPEQSSHGTSRT). The segment at 930 to 954 (FLPEQSSHGTSRTLSSGPSSNLPLP) is disordered. Over residues 943–954 (LSSGPSSNLPLP) the composition is skewed to low complexity.

This sequence belongs to the glutamate-gated ion channel (TC 1.A.10.1) family. GRID1 subfamily. In terms of assembly, homodimer. Interacts (via extracellular N-terminal domain) with CBLN1 (via C1q domain), and more weakly with CBLN2; the interactions mediate the trans-synaptic adhesion complexes also with neurexins and are required for ligand-gated cation channel activity.

It localises to the postsynaptic cell membrane. The catalysed reaction is Ca(2+)(in) = Ca(2+)(out). The enzyme catalyses Na(+)(in) = Na(+)(out). In terms of biological role, member of the ionotropic glutamate receptor family, which plays a crucial role in synaptic organization and signal transduction in the central nervous system. Although it shares structural features with ionotropic glutamate receptors, does not bind glutamate as a primary ligand. Instead, forms trans-synaptic adhesion complexes with presynaptic neurexins and cerebellins, regulating NMDA and AMPA receptor activity and influencing synaptic plasticity through signal transduction. In the presence of neurexins and cerebellins, forms cation-selective channels that are proposed to be gated by glycine and D-serine. However, recent research disputes this ligand-gated cation channel activity. Cation-selective ion channel can be triggered by GRM1 in dopaminergic neurons. Also acts as a receptor for GABA, modulating inhibitory synaptic plasticity through non-ionotropic mechanisms. The chain is Glutamate receptor ionotropic, delta-1 from Homo sapiens (Human).